An 878-amino-acid chain; its full sequence is E3 ubiquitin-protein ligase BRE1-like 1 (878 aa).

The interval 1-21 is disordered; the sequence is MASTGEPDRKRRHFSSISPSE. Coiled-coil stretches lie at residues 48–76, 200–261, 293–382, and 537–624; these read QNLKLSQKLEAQQVECSILEDKLSQIKEK, QLAL…ELQQ, SDRE…EKLQ, and LDMY…ILKS. The segment at 826–865 adopts an RING-type zinc-finger fold; it reads CKACNDRPKEVVITKCYHLFCNPCVQKLTGTRQKKCPTCS.

This sequence belongs to the BRE1 family. In terms of assembly, may act as a tetramer consisting of two copies of HUB1 and two copies of HUB2. Interacts with MED21. In terms of tissue distribution, ubiquitously expressed.

The protein localises to the nucleus. It carries out the reaction S-ubiquitinyl-[E2 ubiquitin-conjugating enzyme]-L-cysteine + [acceptor protein]-L-lysine = [E2 ubiquitin-conjugating enzyme]-L-cysteine + N(6)-ubiquitinyl-[acceptor protein]-L-lysine.. Its pathway is protein modification; protein ubiquitination. Functionally, E3 ubiquitin-protein ligase that monoubiquitinates H2B to form H2BK143ub1. H2BK143ub1 gives a specific tag for epigenetic transcriptional activation and is also prerequisite for H3K4me and maybe H3K79me. It thereby plays a central role in histone code and gene regulation. Forms a ubiquitin ligase complex in cooperation with the E2 enzyme UBC2/RAD6. Required for the regulation of flowering time and defense against necrotrophic fungal pathogens. Involved in the control of seed dormancy and germination. In Arabidopsis thaliana (Mouse-ear cress), this protein is E3 ubiquitin-protein ligase BRE1-like 1 (HUB1).